The following is a 373-amino-acid chain: Cathecol O-methyltransferase 1 (373 aa).

S-adenosyl-L-homocysteine-binding residues include G209, D232, D252, M253, M265, and K266. S-adenosyl-L-methionine is bound at residue D232. The active-site Proton acceptor is H279.

It belongs to the class I-like SAM-binding methyltransferase superfamily. Cation-independent O-methyltransferase family. COMT subfamily.

The catalysed reaction is catechol + S-adenosyl-L-methionine = guaiacol + S-adenosyl-L-homocysteine + H(+). O-methyltransferase that catalyzes the conversion of catechol to guaiacol. Involved in the production of guaiacol in fruits. In Solanum lycopersicum (Tomato), this protein is Cathecol O-methyltransferase 1.